A 565-amino-acid chain; its full sequence is Periplasmic trehalase (565 aa).

The first 30 residues, 1 to 30 (MKSPAPSRPQKMALIPACIFLCFAALSVQA), serve as a signal peptide directing secretion. Substrate contacts are provided by residues Arg-152, 159 to 160 (WD), Asn-196, 205 to 207 (RSQ), 277 to 279 (RPE), and Gly-310. Catalysis depends on proton donor/acceptor residues Asp-312 and Glu-496. A substrate-binding site is contributed by Glu-511. Residues 539–565 (CDNVPATRPLSESTTQPVKPKEAEPTL) form a disordered region.

The protein belongs to the glycosyl hydrolase 37 family. In terms of assembly, monomer.

The protein resides in the periplasm. The enzyme catalyses alpha,alpha-trehalose + H2O = alpha-D-glucose + beta-D-glucose. Functionally, provides the cells with the ability to utilize trehalose at high osmolarity by splitting it into glucose molecules that can subsequently be taken up by the phosphotransferase-mediated uptake system. The sequence is that of Periplasmic trehalase from Shigella dysenteriae serotype 1 (strain Sd197).